Here is a 495-residue protein sequence, read N- to C-terminus: Protein YhjJ (495 aa).

Residues 1-24 (MQGTKIRLLAGSLLMLASAGYVQA) form the signal peptide.

It belongs to the peptidase M16 family.

The protein resides in the periplasm. The protein is Protein YhjJ (yhjJ) of Salmonella typhimurium (strain LT2 / SGSC1412 / ATCC 700720).